Here is a 274-residue protein sequence, read N- to C-terminus: Large ribosomal subunit protein uL2 (274 aa).

The segment at 221-256 (RGTAMNPVDHPHGGGEGRNFGKHPVTPWGVPTKGYK) is disordered.

This sequence belongs to the universal ribosomal protein uL2 family. As to quaternary structure, part of the 50S ribosomal subunit. Forms a bridge to the 30S subunit in the 70S ribosome.

Functionally, one of the primary rRNA binding proteins. Required for association of the 30S and 50S subunits to form the 70S ribosome, for tRNA binding and peptide bond formation. It has been suggested to have peptidyltransferase activity; this is somewhat controversial. Makes several contacts with the 16S rRNA in the 70S ribosome. The polypeptide is Large ribosomal subunit protein uL2 (Hahella chejuensis (strain KCTC 2396)).